We begin with the raw amino-acid sequence, 272 residues long: F-actin-capping protein subunit beta (272 aa).

Serine 2 bears the N-acetylserine mark. Serine 2 carries the post-translational modification Phosphoserine. Lysine 235 carries the post-translational modification N6-acetyllysine. The residue at position 263 (valine 263) is a Phosphoserine.

The protein belongs to the F-actin-capping protein beta subunit family. Component of the F-actin capping complex, composed of a heterodimer of an alpha and a beta subunit. Subunit of dynactin, a multiprotein complex part of a tripartite complex with dynein and a adapter, such as BICDL1, BICD2 or HOOK3. The dynactin complex is built around ACTR1A/ACTB filament and consists of an actin-related filament composed of a shoulder domain, a pointed end and a barbed end. Its length is defined by its flexible shoulder domain. The soulder is composed of 2 DCTN1 subunits, 4 DCTN2 and 2 DCTN3. The 4 DCNT2 (via N-terminus) bind the ACTR1A filament and act as molecular rulers to determine the length. The pointed end is important for binding dynein-dynactin cargo adapters. Consists of 4 subunits: ACTR10, DCNT4, DCTN5 and DCTN6. The barbed end is composed of a CAPZA1:CAPZB heterodimers, which binds ACTR1A/ACTB filament and dynactin and stabilizes dynactin. Interacts with ARHGAP17. Interaction with RCSD1/CAPZIP. Component of the WASH complex, composed of F-actin-capping protein subunit alpha (CAPZA1, CAPZA2 or CAPZA3), F-actin-capping protein subunit beta (CAPZB), WASH (WASHC1, WASH2P, WASH3P, WASH4P, WASH5P or WASH6P), WASHC2 (WASHC2A or WASHC2C), WASHC3, WASHC4 and WASHC5. Interacts with ACTG1. Directly interacts with CRACD; this interaction decreases binding to actin.

The protein localises to the cytoplasm. The protein resides in the cytoskeleton. Its subcellular location is the myofibril. It localises to the sarcomere. Its function is as follows. F-actin-capping proteins bind in a Ca(2+)-independent manner to the fast growing ends of actin filaments (barbed end) thereby blocking the exchange of subunits at these ends. Unlike other capping proteins (such as gelsolin and severin), these proteins do not sever actin filaments. Plays a role in the regulation of cell morphology and cytoskeletal organization. Forms, with CAPZB, the barbed end of the fast growing ends of actin filaments in the dynactin complex and stabilizes dynactin structure. The dynactin multiprotein complex activates the molecular motor dynein for ultra-processive transport along microtubules. The sequence is that of F-actin-capping protein subunit beta from Homo sapiens (Human).